Consider the following 463-residue polypeptide: Homoserine O-acetyltransferase FUB5 (463 aa).

One can recognise an AB hydrolase-1 domain in the interval 113–436 (NVMIICHALS…VSDDGHDAFL (324 aa)). The active-site Nucleophile is Ser211. Residues 296 to 312 (RFGRDTGSKKKTQKQES) are compositionally biased toward basic and acidic residues. The interval 296–331 (RFGRDTGSKKKTQKQESKTLPSNSTPIHSHSGADET) is disordered. Residues Asp403 and His432 contribute to the active site.

Belongs to the AB hydrolase superfamily. MetX family.

It carries out the reaction L-homoserine + acetyl-CoA = O-acetyl-L-homoserine + CoA. It participates in mycotoxin biosynthesis. Homoserine O-acetyltransferase; part of the gene cluster that mediates the biosynthesis of fusaric acid, a mycotoxin with low to moderate toxicity to animals and humans, but with high phytotoxic properties. L-aspartate is suggested as fusaric acid amino acid precursor that is activated and further processed to O-acetyl-L-homoserine by cluster enzymes aspartate kinase FUB3 and homoserine O-acetyltransferase FUB5, as well as enzymes of the primary metabolism. The polyketide synthase (PKS) FUB1 generates the triketide trans-2-hexenal which is presumptively released by the hydrolase FUB4 and linked to the NRPS-bound amino acid precursor by NAD(P)-dependent dehydrogenase FUB6. FUB1, FUB4, and the non-canonical NRPS Fub8 may form an enzyme complex. Further processing of the NRPS-bound intermediate might be carried out by FUB6 and the sulfhydrylase FUB7, enabling a spontaneous electrocyclization to close the carbon backbone of fusaric acid. Dihydrofusaric acid is likely to be released via reduction by the thioester reductase (TR) domain of FUB8 whereupon the final oxidation to fusaric acid may (also) be performed by the FMN-dependent dehydrogenase FUB9. The chain is Homoserine O-acetyltransferase FUB5 from Gibberella moniliformis (strain M3125 / FGSC 7600) (Maize ear and stalk rot fungus).